Here is a 351-residue protein sequence, read N- to C-terminus: Transaldolase (351 aa).

Residue Lys138 is the Schiff-base intermediate with substrate of the active site.

The protein belongs to the transaldolase family. Type 2 subfamily.

It localises to the cytoplasm. The enzyme catalyses D-sedoheptulose 7-phosphate + D-glyceraldehyde 3-phosphate = D-erythrose 4-phosphate + beta-D-fructose 6-phosphate. It participates in carbohydrate degradation; pentose phosphate pathway; D-glyceraldehyde 3-phosphate and beta-D-fructose 6-phosphate from D-ribose 5-phosphate and D-xylulose 5-phosphate (non-oxidative stage): step 2/3. Transaldolase is important for the balance of metabolites in the pentose-phosphate pathway. The sequence is that of Transaldolase from Neisseria gonorrhoeae (strain ATCC 700825 / FA 1090).